Here is a 382-residue protein sequence, read N- to C-terminus: Carbamoyl phosphate synthase small chain (382 aa).

Positions 1–189 are CPSase; that stretch reads MIKSALLVLE…GLPEAKSEDD (189 aa). Ser-47 and Gly-241 together coordinate L-glutamine. The Glutamine amidotransferase type-1 domain maps to 193–380; it reads HVVAYDFGAK…IELIKHYRSS (188 aa). Cys-269 (nucleophile) is an active-site residue. The L-glutamine site is built by Leu-270, Gln-273, Asn-311, Gly-313, and Phe-314. Catalysis depends on residues His-353 and Glu-355.

This sequence belongs to the CarA family. In terms of assembly, composed of two chains; the small (or glutamine) chain promotes the hydrolysis of glutamine to ammonia, which is used by the large (or ammonia) chain to synthesize carbamoyl phosphate. Tetramer of heterodimers (alpha,beta)4.

It catalyses the reaction hydrogencarbonate + L-glutamine + 2 ATP + H2O = carbamoyl phosphate + L-glutamate + 2 ADP + phosphate + 2 H(+). The catalysed reaction is L-glutamine + H2O = L-glutamate + NH4(+). It functions in the pathway amino-acid biosynthesis; L-arginine biosynthesis; carbamoyl phosphate from bicarbonate: step 1/1. Its pathway is pyrimidine metabolism; UMP biosynthesis via de novo pathway; (S)-dihydroorotate from bicarbonate: step 1/3. Functionally, small subunit of the glutamine-dependent carbamoyl phosphate synthetase (CPSase). CPSase catalyzes the formation of carbamoyl phosphate from the ammonia moiety of glutamine, carbonate, and phosphate donated by ATP, constituting the first step of 2 biosynthetic pathways, one leading to arginine and/or urea and the other to pyrimidine nucleotides. The small subunit (glutamine amidotransferase) binds and cleaves glutamine to supply the large subunit with the substrate ammonia. The chain is Carbamoyl phosphate synthase small chain from Salmonella typhi.